We begin with the raw amino-acid sequence, 294 residues long: Lipoprotein NlpI (294 aa).

Positions 1–18 (MKPFLRWCFVATALTLAG) are cleaved as a signal peptide. Residue C19 is the site of N-palmitoyl cysteine attachment. C19 carries S-diacylglycerol cysteine lipidation. 3 TPR repeats span residues 62-95 (AQLLYERGVLYDSLGLRALARNDFSQALAIRPDM), 96-129 (PEVFNYLGIYLTQAGNFDAAYEAFDSVLELDPTY), and 234-267 (SETNFYLGKYYLSLGDLDSATALFKLAVANNVHN).

As to quaternary structure, homodimer.

Its subcellular location is the cell membrane. May be involved in cell division. May play a role in bacterial septation or regulation of cell wall degradation during cell division. In Escherichia coli O157:H7, this protein is Lipoprotein NlpI (nlpI).